A 402-amino-acid chain; its full sequence is NAD-dependent protein deacetylase sirtuin-7 (402 aa).

A disordered region spans residues 1-23; sequence MAAGGGLSRSERKAAERVRRLRE. Residues 9–23 are compositionally biased toward basic and acidic residues; it reads RSERKAAERVRRLRE. The Deacetylase sirtuin-type domain occupies 83–330; the sequence is PEELRRKVRE…QLLMNELGLE (248 aa). NAD(+) is bound by residues 108 to 127 and 168 to 171; these read GAGI…NGVW and QNCD. The Proton acceptor role is filled by histidine 188. Residues cysteine 196, cysteine 199, cysteine 226, and cysteine 229 each contribute to the Zn(2+) site. NAD(+)-binding positions include 269–271, 298–300, and cysteine 316; these read GSS and NLQ. A disordered region spans residues 355-402; sequence SHSRKSLCRSREEAPPGDQSDPLASAPPILGGWFGRGCAKRAKRKKVA. Position 390 is an asymmetric dimethylarginine; alternate (arginine 390). The residue at position 390 (arginine 390) is an Omega-N-methylarginine; alternate. The segment covering 392 to 402 has biased composition (basic residues); that stretch reads CAKRAKRKKVA.

This sequence belongs to the sirtuin family. Class IV subfamily. Interacts with UBTF and the RNA polymerase I complex. Interacts with components of the B-WICH complex, such as MYBBP1A, SMARCA5/SNF2H and BAZ1B/WSTF. Interacts with ELK4, leading to stabilization at target promoters for H3K18Ac deacetylation. Interacts with histone H2A and/or histone H2B. Interacts with DNMT1. Interacts with SIRT1. It depends on Zn(2+) as a cofactor. In terms of processing, phosphorylated during mitosis. Post-translationally, methylation at Arg-390 by PRMT6 inhibits the H3K18Ac histone deacetylase activity, promoting mitochondria biogenesis and maintaining mitochondria respiration. Ubiquitinated via 'Lys-63'-linked ubiquitin chains. Deubiquitinated by USP7, inhibiting the H3K18Ac histone deacetylase activity and regulating gluconeogenesis. Ubiquitinated by E3 ubiquitin-protein ligase complex containing FBXO7; leading to proteasomal degradation. Detected in liver, spleen and testis. Detected in embryos.

The protein resides in the nucleus. It localises to the nucleolus. It is found in the nucleoplasm. Its subcellular location is the chromosome. The protein localises to the cytoplasm. It catalyses the reaction N(6)-acetyl-L-lysyl-[protein] + NAD(+) + H2O = 2''-O-acetyl-ADP-D-ribose + nicotinamide + L-lysyl-[protein]. The catalysed reaction is N(6)-glutaryl-L-lysyl-[protein] + NAD(+) + H2O = 2''-O-glutaryl-ADP-D-ribose + nicotinamide + L-lysyl-[protein]. The enzyme catalyses N(6)-succinyl-L-lysyl-[protein] + NAD(+) + H2O = 2''-O-succinyl-ADP-D-ribose + nicotinamide + L-lysyl-[protein]. It carries out the reaction N(6)-propanoyl-L-lysyl-[protein] + NAD(+) + H2O = 3''-O-propanoyl-ADP-D-ribose + nicotinamide + L-lysyl-[protein]. It catalyses the reaction N(6)-decanoyl-L-lysyl-[protein] + NAD(+) + H2O = 2''-O-decanoyl-ADP-D-ribose + nicotinamide + L-lysyl-[protein]. NAD-dependent protein-lysine deacetylase and deacylase activities are activated by nucleic acids. Histone deacetylase activity is activated by DNA. Protein-lysine deacylase activity is activated by RNA. H3K18Ac histone deacetylase activity is inhibited by methylation at Arg-390. H3K18Ac histone deacetylase activity is inhibited by deubiquitination by USP7. Functionally, NAD-dependent protein-lysine deacylase that can act both as a deacetylase or deacylase (desuccinylase, depropionylase and deglutarylase), depending on the context. Also acts as a dedecanoylase. Specifically mediates deacetylation of histone H3 at 'Lys-18' (H3K18Ac). In contrast to other histone deacetylases, displays strong preference for a specific histone mark, H3K18Ac, directly linked to control of gene expression. H3K18Ac is mainly present around the transcription start site of genes and has been linked to activation of nuclear hormone receptors; SIRT7 thereby acts as a transcription repressor. Moreover, H3K18 hypoacetylation has been reported as a marker of malignancy in various cancers and seems to maintain the transformed phenotype of cancer cells. Also able to mediate deacetylation of histone H3 at 'Lys-36' (H3K36Ac) in the context of nucleosomes. Also mediates deacetylation of non-histone proteins, such as ATM, CDK9, DDX21, DDB1, FBL, FKBP5/FKBP51, GABPB1, RAN, RRP9/U3-55K and POLR1E/PAF53. Enriched in nucleolus where it stimulates transcription activity of the RNA polymerase I complex. Acts by mediating the deacetylation of the RNA polymerase I subunit POLR1E/PAF53, thereby promoting the association of RNA polymerase I with the rDNA promoter region and coding region. In response to metabolic stress, SIRT7 is released from nucleoli leading to hyperacetylation of POLR1E/PAF53 and decreased RNA polymerase I transcription. Required to restore the transcription of ribosomal RNA (rRNA) at the exit from mitosis. Promotes pre-ribosomal RNA (pre-rRNA) cleavage at the 5'-terminal processing site by mediating deacetylation of RRP9/U3-55K, a core subunit of the U3 snoRNP complex. Mediates 'Lys-37' deacetylation of Ran, thereby regulating the nuclear export of NF-kappa-B subunit RELA/p65. Acts as a regulator of DNA damage repair by mediating deacetylation of ATM during the late stages of DNA damage response, promoting ATM dephosphorylation and deactivation. May also deacetylate p53/TP53 and promotes cell survival, however such data need additional confirmation. Suppresses the activity of the DCX (DDB1-CUL4-X-box) E3 ubiquitin-protein ligase complexes by mediating deacetylation of DDB1, which prevents the interaction between DDB1 and CUL4 (CUL4A or CUL4B). Activates RNA polymerase II transcription by mediating deacetylation of CDK9, thereby promoting 'Ser-2' phosphorylation of the C-terminal domain (CTD) of RNA polymerase II. Deacetylates FBL, promoting histone-glutamine methyltransferase activity of FBL. Acts as a regulator of mitochondrial function by catalyzing deacetylation of GABPB1. Regulates Akt/AKT1 activity by mediating deacetylation of FKBP5/FKBP51. Required to prevent R-loop-associated DNA damage and transcription-associated genomic instability by mediating deacetylation and subsequent activation of DDX21, thereby overcoming R-loop-mediated stalling of RNA polymerases. In addition to protein deacetylase activity, also acts as protein-lysine deacylase. Acts as a protein depropionylase by mediating depropionylation of Osterix (SP7), thereby regulating bone formation by osteoblasts. Acts as a histone deglutarylase by mediating deglutarylation of histone H4 on 'Lys-91' (H4K91glu); a mark that destabilizes nucleosomes by promoting dissociation of the H2A-H2B dimers from nucleosomes. Acts as a histone desuccinylase: in response to DNA damage, recruited to DNA double-strand breaks (DSBs) and catalyzes desuccinylation of histone H3 on 'Lys-122' (H3K122succ), thereby promoting chromatin condensation and DSB repair. Also promotes DSB repair by promoting H3K18Ac deacetylation, regulating non-homologous end joining (NHEJ). Along with its role in DNA repair, required for chromosome synapsis during prophase I of female meiosis by catalyzing H3K18Ac deacetylation. Involved in transcriptional repression of LINE-1 retrotransposon via H3K18Ac deacetylation, and promotes their association with the nuclear lamina. Required to stabilize ribosomal DNA (rDNA) heterochromatin and prevent cellular senescence induced by rDNA instability. Acts as a negative regulator of SIRT1 by preventing autodeacetylation of SIRT1, restricting SIRT1 deacetylase activity. In Mus musculus (Mouse), this protein is NAD-dependent protein deacetylase sirtuin-7.